Here is a 312-residue protein sequence, read N- to C-terminus: Ribose-phosphate pyrophosphokinase (312 aa).

ATP is bound by residues 34-36 (DGE) and 93-94 (RQ). Residues H128 and D167 each contribute to the Mg(2+) site. K191 is a catalytic residue. R193 and D217 together coordinate D-ribose 5-phosphate.

Belongs to the ribose-phosphate pyrophosphokinase family. Class I subfamily. As to quaternary structure, homohexamer. Mg(2+) serves as cofactor.

It localises to the cytoplasm. It carries out the reaction D-ribose 5-phosphate + ATP = 5-phospho-alpha-D-ribose 1-diphosphate + AMP + H(+). It functions in the pathway metabolic intermediate biosynthesis; 5-phospho-alpha-D-ribose 1-diphosphate biosynthesis; 5-phospho-alpha-D-ribose 1-diphosphate from D-ribose 5-phosphate (route I): step 1/1. Its function is as follows. Involved in the biosynthesis of the central metabolite phospho-alpha-D-ribosyl-1-pyrophosphate (PRPP) via the transfer of pyrophosphoryl group from ATP to 1-hydroxyl of ribose-5-phosphate (Rib-5-P). This chain is Ribose-phosphate pyrophosphokinase, found in Baumannia cicadellinicola subsp. Homalodisca coagulata.